The following is a 449-amino-acid chain: Plasmepsin IV (449 aa).

Topologically, residues 1 to 37 are cytoplasmic; sequence MALTVKEEEFSNTLIKNASAFDRLKLGNLKNLKIQKK. Positions 1 to 121 are excised as a propeptide; the sequence is MALTVKEEEF…SGYAQKGYLG (121 aa). A helical; Signal-anchor for type II membrane protein membrane pass occupies residues 38–58; it reads LQFLYLILFVLITGVFFFFLI. Residues 59-449 lie on the Lumenal side of the membrane; the sequence is GNFYSHRKLY…SVGFAVAKNL (391 aa). The Peptidase A1 domain occupies 137 to 444; it reads FYGEGQIGTN…DYEKESVGFA (308 aa). Aspartate 155 is an active-site residue. A disulfide bridge connects residues cysteine 168 and cysteine 173. Residue aspartate 335 is part of the active site. A disulfide bridge links cysteine 370 with cysteine 406.

Belongs to the peptidase A1 family. As to quaternary structure, component of the hemozoin formation complex (HFC) composed of falcipains FP2A and/or FP2B, plasmepsins PMII, PMIII/HAP and PMIV, heme detoxifying protein HDP and falcilysin FLN. The HFC complex is involved in hemoglobin degradation and detoxification of heme in the food vacuole during the asexual blood stage. Post-translationally, proteolytically cleaved into the soluble active mature form by cysteine proteases in the digestive vacuole of trophozoites. Proteolysis requires an acidic environment. Autoprocessing or transprocessing by other plasmepsins such as PMII may serve as an alternate activation system.

The protein resides in the membrane. Its subcellular location is the vacuole lumen. The enzyme catalyses Hydrolysis of the bonds linking certain hydrophobic residues in hemoglobin or globin. Also cleaves small molecules substrates such as Ala-Leu-Glu-Arg-Thr-Phe-|-Phe(NO2)-Ser-Phe-Pro-Thr.. With respect to regulation, inhibited by KNI derived compounds KNI-10333 and to a lesser extent KNI-10743. During the asexual blood stage, catalyzes the cleavage of denatured host hemoglobin (Hb). Digestion of host Hb is an essential step which provides the parasite with amino acids for protein synthesis, and regulates osmolarity. The protein is Plasmepsin IV of Plasmodium falciparum (isolate 3D7).